We begin with the raw amino-acid sequence, 509 residues long: Dihydrolipoyl dehydrogenase, mitochondrial (509 aa).

The N-terminal 35 residues, Met1–Tyr35, are a transit peptide targeting the mitochondrion. Lys66 is modified (N6-acetyllysine; alternate). Lys66 is subject to N6-succinyllysine; alternate. Residues Glu71 to Cys80 and Lys89 contribute to the FAD site. Residues Cys80 and Cys85 are joined by a disulfide bond. Lys104, Lys122, Lys132, and Lys143 each carry N6-acetyllysine; alternate. N6-succinyllysine; alternate is present on residues Lys104, Lys122, Lys132, and Lys143. Gly154 provides a ligand contact to FAD. Residues Lys159 and Lys166 each carry the N6-succinyllysine modification. Position 183 to 185 (Thr183 to Ser185) interacts with FAD. NAD(+) is bound by residues Gly220 to Glu227 and Glu243. Residues Lys273 and Lys277 each carry the N6-succinyllysine modification. Residue Val278 participates in NAD(+) binding. Phosphoserine occurs at positions 285 and 297. Gly314 lines the NAD(+) pocket. Lys346 carries the post-translational modification N6-acetyllysine. FAD-binding positions include Asp355 and Met361–His364. N6-acetyllysine; alternate is present on Lys410. N6-succinyllysine; alternate is present on Lys410. Lys417 and Lys420 each carry N6-acetyllysine. Residue Lys430 is modified to N6-succinyllysine. Residue His487 is the Proton acceptor of the active site. Residue Ser502 is modified to Phosphoserine. At Lys505 the chain carries N6-acetyllysine; alternate. Lys505 bears the N6-succinyllysine; alternate mark.

The protein belongs to the class-I pyridine nucleotide-disulfide oxidoreductase family. In terms of assembly, homodimer. Part of the multimeric pyruvate dehydrogenase complex that contains multiple copies of pyruvate dehydrogenase (subunits PDHA (PDHA1 or PDHA2) and PDHB, E1), dihydrolipoamide acetyltransferase (DLAT, E2) and lipoamide dehydrogenase (DLD, E3). These subunits are bound to an inner core composed of about 48 DLAT and 12 PDHX molecules (by non covalent bonds). The 2-oxoglutarate dehydrogenase complex is composed of OGDH (2-oxoglutarate dehydrogenase; E1), DLST (dihydrolipoamide succinyltransferase; E2), DLD (dihydrolipoamide dehydrogenase; E3) and the assembly factor KGD4. It contains multiple copies of the three enzymatic components (E1, E2 and E3). In the nucleus, the 2-oxoglutarate dehydrogenase complex associates with KAT2A. Interacts with PDHX. Requires FAD as cofactor. Post-translationally, tyrosine phosphorylated.

Its subcellular location is the mitochondrion matrix. It localises to the nucleus. It is found in the cell projection. The protein resides in the cilium. The protein localises to the flagellum. Its subcellular location is the cytoplasmic vesicle. It localises to the secretory vesicle. It is found in the acrosome. The enzyme catalyses N(6)-[(R)-dihydrolipoyl]-L-lysyl-[protein] + NAD(+) = N(6)-[(R)-lipoyl]-L-lysyl-[protein] + NADH + H(+). In terms of biological role, lipoamide dehydrogenase is a component of the glycine cleavage system as well as an E3 component of three alpha-ketoacid dehydrogenase complexes (pyruvate-, alpha-ketoglutarate-, and branched-chain amino acid-dehydrogenase complex). The 2-oxoglutarate dehydrogenase complex is mainly active in the mitochondrion. A fraction of the 2-oxoglutarate dehydrogenase complex also localizes in the nucleus and is required for lysine succinylation of histones: associates with KAT2A on chromatin and provides succinyl-CoA to histone succinyltransferase KAT2A. In monomeric form may have additional moonlighting function as serine protease. Involved in the hyperactivation of spermatazoa during capacitation and in the spermatazoal acrosome reaction. This chain is Dihydrolipoyl dehydrogenase, mitochondrial (DLD), found in Pongo abelii (Sumatran orangutan).